Here is a 737-residue protein sequence, read N- to C-terminus: Fibronectin type III domain-containing protein 7 (737 aa).

The signal sequence occupies residues 1–25 (MAGRPEKCFSLIRFTLLCLKMVISS). 8 consecutive Fibronectin type-III domains span residues 28 to 115 (APEI…TVLA), 116 to 203 (APVL…SPRA), 204 to 288 (PANI…TVAC), 289 to 373 (APGR…TAPC), 374 to 459 (CPND…TAPC), 460 to 544 (SPEI…TVPC), 545 to 633 (CPAG…CPLG), and 631 to 715 (PLGV…YSVT). N-linked (GlcNAc...) asparagine glycosylation is present at N230. N433 carries an N-linked (GlcNAc...) asparagine glycan.

The protein resides in the secreted. This is Fibronectin type III domain-containing protein 7 (Fndc7) from Mus musculus (Mouse).